The primary structure comprises 248 residues: 2-acetamido-2-deoxy-D-galactose-binding seed lectin 2 (248 aa).

N-linked (GlcNAc...) asparagine; partial glycosylation is present at asparagine 119. Mn(2+) is bound by residues glutamate 128 and aspartate 130. Aspartate 130, tyrosine 132, asparagine 134, and aspartate 138 together coordinate Ca(2+). Residues aspartate 138 and histidine 144 each coordinate Mn(2+).

Belongs to the leguminous lectin family.

The protein is 2-acetamido-2-deoxy-D-galactose-binding seed lectin 2 of Cytisus scoparius (Scotch broom).